Here is a 98-residue protein sequence, read N- to C-terminus: NADH-ubiquinone oxidoreductase chain 4L (98 aa).

Helical transmembrane passes span 1 to 21 (MSMV…GLLM), 29 to 49 (SLLC…LTIL), and 61 to 81 (IILL…LVMV).

This sequence belongs to the complex I subunit 4L family. Core subunit of respiratory chain NADH dehydrogenase (Complex I) which is composed of 45 different subunits.

It localises to the mitochondrion inner membrane. It catalyses the reaction a ubiquinone + NADH + 5 H(+)(in) = a ubiquinol + NAD(+) + 4 H(+)(out). Core subunit of the mitochondrial membrane respiratory chain NADH dehydrogenase (Complex I) which catalyzes electron transfer from NADH through the respiratory chain, using ubiquinone as an electron acceptor. Part of the enzyme membrane arm which is embedded in the lipid bilayer and involved in proton translocation. The protein is NADH-ubiquinone oxidoreductase chain 4L (MT-ND4L) of Bos indicus (Zebu).